The following is a 619-amino-acid chain: CLPTM1-like membrane protein cnrB (619 aa).

Positions 1–21 (MNNQGGAVAANGQRPQAQQQQ) are disordered. Over residues 9-21 (AANGQRPQAQQQQ) the composition is skewed to low complexity. The next 6 membrane-spanning stretches (helical) occupy residues 26 to 46 (IMGI…ASFA), 324 to 344 (WILG…FLAF), 360 to 380 (LSVK…LYLL), 384 to 404 (TSYM…WKLG), 445 to 465 (YLSW…LYYH), and 474 to 496 (VVSS…QLFI). The segment at 566–619 (SEEAEEVQQQDKKEIKEKVEEREEEKQEEEEEEKEKEEESTSSSKVTKRKTKKV) is disordered. Residues 574–590 (QQDKKEIKEKVEEREEE) show a composition bias toward basic and acidic residues. Residues 591-605 (KQEEEEEEKEKEEES) are compositionally biased toward acidic residues.

It belongs to the CLPTM1 family.

It is found in the membrane. In Dictyostelium discoideum (Social amoeba), this protein is CLPTM1-like membrane protein cnrB (cnrB).